The sequence spans 365 residues: Heterogeneous nuclear ribonucleoproteins A1 homolog (365 aa).

The interval 4-94 (SEAPNEPEQL…EPKRAVSRED (91 aa)) is globular A domain. RRM domains follow at residues 14-97 (RKLF…DSSR) and 105-184 (KKIF…LSKQ). Residues 95–185 (SSRPGAHLTV…QVRKALSKQE (91 aa)) are globular B domain. Disordered regions lie at residues 175-208 (SQVRKALSKQEMASVSGSQRERGGSGNYGSRGGF) and 328-365 (GPMKGGNYGGGRNSGPYGGGYGGGSASSSSGYGGGRRF). Composition is skewed to gly residues over residues 198–208 (GSGNYGSRGGF) and 330–365 (MKGGNYGGGRNSGPYGGGYGGGSASSSSGYGGGRRF). The interval 321–359 (SQSSSNFGPMKGGNYGGGRNSGPYGGGYGGGSASSSSGY) is nuclear targeting sequence.

The protein localises to the nucleus. Its subcellular location is the cytoplasm. Its function is as follows. This protein is a component of ribonucleosomes. This Xenopus laevis (African clawed frog) protein is Heterogeneous nuclear ribonucleoproteins A1 homolog (hnrnpa1).